The following is a 211-amino-acid chain: tRNA (guanine-N(7)-)-methyltransferase (211 aa).

Residues Glu-44, Asp-69, Asp-96, and Asp-118 each contribute to the S-adenosyl-L-methionine site. Residue Asp-118 is part of the active site. Lys-122 provides a ligand contact to substrate. The tract at residues 124 to 129 (KHEKRR) is interaction with RNA. Residues Asp-154 and 191-194 (TEYE) each bind substrate.

It belongs to the class I-like SAM-binding methyltransferase superfamily. TrmB family.

The enzyme catalyses guanosine(46) in tRNA + S-adenosyl-L-methionine = N(7)-methylguanosine(46) in tRNA + S-adenosyl-L-homocysteine. The protein operates within tRNA modification; N(7)-methylguanine-tRNA biosynthesis. Functionally, catalyzes the formation of N(7)-methylguanine at position 46 (m7G46) in tRNA. This chain is tRNA (guanine-N(7)-)-methyltransferase, found in Streptococcus pyogenes serotype M6 (strain ATCC BAA-946 / MGAS10394).